We begin with the raw amino-acid sequence, 363 residues long: Pyrimidine monooxygenase RutA (363 aa).

FMN contacts are provided by residues 49-50, N115, E124, 140-141, and S190; these read IK and RY.

It belongs to the NtaA/SnaA/DszA monooxygenase family. RutA subfamily.

The catalysed reaction is uracil + FMNH2 + NADH + O2 = (Z)-3-ureidoacrylate + FMN + NAD(+) + H2O + H(+). It catalyses the reaction thymine + FMNH2 + NADH + O2 = (Z)-2-methylureidoacrylate + FMN + NAD(+) + H2O + H(+). Functionally, catalyzes the pyrimidine ring opening between N-3 and C-4 by an unusual flavin hydroperoxide-catalyzed mechanism, adding oxygen atoms in the process to yield ureidoacrylate peracid, that immediately reacts with FMN forming ureidoacrylate and FMN-N(5)-oxide. The FMN-N(5)-oxide reacts spontaneously with NADH to produce FMN. Requires the flavin reductase RutF to regenerate FMN in vivo. This chain is Pyrimidine monooxygenase RutA, found in Escherichia coli O157:H7 (strain EC4115 / EHEC).